The chain runs to 169 residues: Dihydrofolate reductase type 8 (169 aa).

Residues 3–169 (ELHAILAATA…FTYRKKELTE (167 aa)) form the DHFR domain.

It belongs to the dihydrofolate reductase family. In terms of assembly, homodimer.

It carries out the reaction (6S)-5,6,7,8-tetrahydrofolate + NADP(+) = 7,8-dihydrofolate + NADPH + H(+). Its pathway is cofactor biosynthesis; tetrahydrofolate biosynthesis; 5,6,7,8-tetrahydrofolate from 7,8-dihydrofolate: step 1/1. In terms of biological role, key enzyme in folate metabolism. Catalyzes an essential reaction for de novo glycine and purine synthesis, and for DNA precursor synthesis. The chain is Dihydrofolate reductase type 8 (dhfrVIII) from Escherichia coli.